The chain runs to 365 residues: 2-aminoethylphosphonate--pyruvate transaminase (365 aa).

Lys194 carries the N6-(pyridoxal phosphate)lysine modification.

It belongs to the class-V pyridoxal-phosphate-dependent aminotransferase family. PhnW subfamily. Homodimer. Pyridoxal 5'-phosphate is required as a cofactor.

The catalysed reaction is (2-aminoethyl)phosphonate + pyruvate = phosphonoacetaldehyde + L-alanine. Involved in phosphonate degradation. This chain is 2-aminoethylphosphonate--pyruvate transaminase, found in Bacillus thuringiensis (strain Al Hakam).